Consider the following 72-residue polypeptide: Translational regulator CsrA (72 aa).

The protein belongs to the CsrA/RsmA family. As to quaternary structure, homodimer; the beta-strands of each monomer intercalate to form a hydrophobic core, while the alpha-helices form wings that extend away from the core.

It is found in the cytoplasm. Its function is as follows. A translational regulator that binds mRNA to regulate translation initiation and/or mRNA stability. Usually binds in the 5'-UTR at or near the Shine-Dalgarno sequence preventing ribosome-binding, thus repressing translation. Its main target seems to be the major flagellin gene, while its function is anatagonized by FliW. This is Translational regulator CsrA from Clostridium novyi (strain NT).